A 197-amino-acid chain; its full sequence is MYEYIKGKYIDMYKDYIVIENNNIGYKIYTSGSTMAKLPSIGENIMLYTEQIVREDFIGIYGFLTKDELSMFKLLLTINGVGAKAALSLLSISNVSTLKYAIKVGDEKTITRAPGIGKKTAQRIILELKDKIEIDISEEDDEQIINKVTDDKKVLEAVAALVTLGYSEKEASKVINLCDKNNSLEQIIKEALKHLMK.

The segment at 1–64 (MYEYIKGKYI…EDFIGIYGFL (64 aa)) is domain I. The segment at 65 to 143 (TKDELSMFKL…IDISEEDDEQ (79 aa)) is domain II. The tract at residues 144-148 (IINKV) is flexible linker. The interval 149 to 197 (TDDKKVLEAVAALVTLGYSEKEASKVINLCDKNNSLEQIIKEALKHLMK) is domain III.

Belongs to the RuvA family. In terms of assembly, homotetramer. Forms an RuvA(8)-RuvB(12)-Holliday junction (HJ) complex. HJ DNA is sandwiched between 2 RuvA tetramers; dsDNA enters through RuvA and exits via RuvB. An RuvB hexamer assembles on each DNA strand where it exits the tetramer. Each RuvB hexamer is contacted by two RuvA subunits (via domain III) on 2 adjacent RuvB subunits; this complex drives branch migration. In the full resolvosome a probable DNA-RuvA(4)-RuvB(12)-RuvC(2) complex forms which resolves the HJ.

The protein localises to the cytoplasm. The RuvA-RuvB-RuvC complex processes Holliday junction (HJ) DNA during genetic recombination and DNA repair, while the RuvA-RuvB complex plays an important role in the rescue of blocked DNA replication forks via replication fork reversal (RFR). RuvA specifically binds to HJ cruciform DNA, conferring on it an open structure. The RuvB hexamer acts as an ATP-dependent pump, pulling dsDNA into and through the RuvAB complex. HJ branch migration allows RuvC to scan DNA until it finds its consensus sequence, where it cleaves and resolves the cruciform DNA. This is Holliday junction branch migration complex subunit RuvA from Clostridium botulinum (strain Loch Maree / Type A3).